Reading from the N-terminus, the 529-residue chain is Putative E3 ubiquitin-protein ligase ARI4 (529 aa).

The segment covering Met1–Asp22 has biased composition (acidic residues). Residues Met1 to His23 form a disordered region. Positions Lys115 to Lys327 are TRIAD supradomain. Zn(2+)-binding residues include Cys119, Cys122, Cys137, His139, Cys142, Cys145, Cys164, Cys169, Cys206, Cys212, Cys230, Cys232, Cys237, Cys240, His245, Cys250, Cys277, and Cys280. An RING-type 1 zinc finger spans residues Cys119–Cys169. The IBR-type zinc finger occupies Glu186 to Cys250. An RING-type 2; atypical zinc finger spans residues Cys277 to Cys305. Residue Cys290 is part of the active site. Zn(2+) is bound by residues Cys295, Cys297, Cys302, Cys305, His313, and Cys323.

Belongs to the RBR family. Ariadne subfamily. The cofactor is Zn(2+).

It catalyses the reaction [E2 ubiquitin-conjugating enzyme]-S-ubiquitinyl-L-cysteine + [acceptor protein]-L-lysine = [E2 ubiquitin-conjugating enzyme]-L-cysteine + [acceptor protein]-N(6)-ubiquitinyl-L-lysine.. The protein operates within protein modification; protein ubiquitination. Its function is as follows. Might act as an E3 ubiquitin-protein ligase, or as part of E3 complex, which accepts ubiquitin from specific E2 ubiquitin-conjugating enzymes and then transfers it to substrates. In Arabidopsis thaliana (Mouse-ear cress), this protein is Putative E3 ubiquitin-protein ligase ARI4 (ARI4).